A 934-amino-acid polypeptide reads, in one-letter code: Complement component C6 (934 aa).

The first 21 residues, 1 to 21 (MTRHLTLCFILLIILIDKSEA), serve as a signal peptide directing secretion. 11 disulfide bridges follow: Cys-22/Cys-61, Cys-24/Cys-65, Cys-35/Cys-73, Cys-39/Cys-78, Cys-82/Cys-117, Cys-93/Cys-127, Cys-96/Cys-133, Cys-140/Cys-151, Cys-146/Cys-164, Cys-158/Cys-173, and Cys-180/Cys-218. 2 TSP type-1 domains span residues 22 to 79 (CFCD…ETCP) and 81 to 134 (NCVL…ELCK). C-linked (Man) tryptophan glycosylation is found at Trp-29 and Trp-32. The O-linked (Fuc...) serine glycan is linked to Ser-38. A glycan (C-linked (Man) tryptophan) is linked at Trp-90. One can recognise an LDL-receptor class A domain in the interval 138–175 (TDCKNKFLCDSGRCIPSKLKCNGENDCGDNSDERNCGR). Positions 156, 159, 161, 163, 169, and 170 each coordinate Ca(2+). Residues 176–522 (TKPVCSRTYT…EYAAKFDPCQ (347 aa)) enclose the MACPF domain. A beta stranded transmembrane segment spans residues 278–290 (SFYVPIFYSSKKS). Residue Asn-324 is glycosylated (N-linked (GlcNAc...) asparagine). O-linked (Fuc...) threonine glycosylation is present at Thr-392. Cystine bridges form between Cys-399/Cys-420, Cys-499/Cys-623, Cys-521/Cys-570, Cys-523/Cys-539, Cys-526/Cys-541, Cys-543/Cys-552, Cys-577/Cys-611, Cys-589/Cys-601, Cys-644/Cys-686, Cys-672/Cys-699, Cys-704/Cys-746, Cys-732/Cys-761, Cys-773/Cys-823, Cys-784/Cys-801, Cys-786/Cys-837, Cys-793/Cys-816, Cys-862/Cys-873, Cys-867/Cys-919, Cys-880/Cys-897, Cys-882/Cys-932, and Cys-888/Cys-912. Residues 402 to 415 (YETKKRFLFFTKTY) traverse the membrane as a beta stranded segment. The 31-residue stretch at 523–553 (CAPCPNNGRPRLSGTECLCVCQSGTYGENCE) folds into the EGF-like domain. The 48-residue stretch at 565 to 612 (DGNWGCWSSWSACNAAYRRSRSRECNNPEPQRGGQRCEGKHWQEEDCT) folds into the TSP type-1 3 domain. C-linked (Man) tryptophan glycans are attached at residues Trp-568, Trp-571, and Trp-574. CCP stretches follow at residues 611–688 (CTFS…RCLP) and 689–765 (DRTW…EKDI). 2 consecutive Sushi domains span residues 642-701 (SGCP…ECQR) and 702-763 (TECL…SCEK). Residues 642–934 (SGCPQPPLPE…EILNPGRCLD (293 aa)) form a C5B-binding domain region. 2 factor I module (FIM) regions span residues 766 to 840 (LTKS…CQEG) and 858 to 934 (KRVP…RCLD). The region spanning 780-839 (SGSECVCMSPEEDCSSYSEDLCIFDEGSSQYFTSSACKFLAEKCLNSNQFHFVHAGSCQE) is the Kazal-like 1 domain. The region spanning 876–934 (HTSNCVCLLPPQCPKDENQLHCVKMGSSMRGKTVNICTLGAVRCANRKVEILNPGRCLD) is the Kazal-like 2 domain.

The protein belongs to the complement C6/C7/C8/C9 family. Component of the membrane attack complex (MAC), composed of complement C5b, C6, C7, C8A, C8B, C8G and multiple copies of the pore-forming subunit C9. In terms of processing, all cysteine residues are assumed to be cross-linked to one another. Individual modules containing an even number of conserved cysteine residues are supposed to have disulfide linkages only within the same module.

It is found in the secreted. The protein localises to the target cell membrane. Membrane attack complex (MAC) assembly is inhibited by CD59, thereby protecting self-cells from damage during complement activation. MAC assembly is also inhibited by clusterin (CLU) chaperones that inhibit polymerization of C9. Functionally, component of the membrane attack complex (MAC), a multiprotein complex activated by the complement cascade, which inserts into a target cell membrane and forms a pore, leading to target cell membrane rupture and cell lysis. The MAC is initiated by proteolytic cleavage of C5 into complement C5b in response to the classical, alternative, lectin and GZMK complement pathways. The complement pathways consist in a cascade of proteins that leads to phagocytosis and breakdown of pathogens and signaling that strengthens the adaptive immune system. Together with component C5b, involved in MAC complex assembly: complement C5b and C6 associate with the outer leaflet of target cell membrane, reducing the energy for membrane bending. The sequence is that of Complement component C6 (C6) from Rattus norvegicus (Rat).